The primary structure comprises 582 residues: Calcium-dependent protein kinase 24 (582 aa).

Residues 1–36 (MGSCVSSPLKGSPFGKRPVRRRHSSNSRTSSVPRFD) form a disordered region. The N-myristoyl glycine moiety is linked to residue glycine 2. Positions 66 to 324 (YDLGKELGRG…VQEVLEHPWI (259 aa)) constitute a Protein kinase domain. ATP-binding positions include 72 to 80 (LGRGEFGVT) and lysine 95. Aspartate 190 serves as the catalytic Proton acceptor. At serine 230 the chain carries Phosphoserine. The segment at 330 to 360 (APNVNLGDNVRTKIQQFLLMNRFKKKVLRIV) is autoinhibitory domain. 4 consecutive EF-hand domains span residues 367–402 (EEIA…IGQV), 403–438 (VPDG…LKRM), 439–474 (GCDE…DKLG), and 478–513 (GNDQ…GTDW). Ca(2+) contacts are provided by aspartate 380, aspartate 382, asparagine 384, histidine 386, glutamate 391, aspartate 416, aspartate 418, asparagine 420, methionine 422, glutamate 427, aspartate 452, asparagine 454, asparagine 456, glutamate 463, aspartate 491, asparagine 493, aspartate 495, and arginine 497. Position 499 is a phosphoserine (serine 499). Glutamate 502 contributes to the Ca(2+) binding site.

It belongs to the protein kinase superfamily. Ser/Thr protein kinase family. CDPK subfamily.

Its subcellular location is the membrane. It catalyses the reaction L-seryl-[protein] + ATP = O-phospho-L-seryl-[protein] + ADP + H(+). The catalysed reaction is L-threonyl-[protein] + ATP = O-phospho-L-threonyl-[protein] + ADP + H(+). Activated by calcium. Autophosphorylation may play an important role in the regulation of the kinase activity. Its function is as follows. May play a role in signal transduction pathways that involve calcium as a second messenger. The chain is Calcium-dependent protein kinase 24 (CPK24) from Arabidopsis thaliana (Mouse-ear cress).